We begin with the raw amino-acid sequence, 385 residues long: Spindle pole component BBP1 (385 aa).

Phosphoserine is present on Ser29. A compositionally biased stretch (basic and acidic residues) spans Tyr34–Gln48. The tract at residues Tyr34–Gly76 is disordered. Residues Arg64–Ser75 are compositionally biased toward low complexity. A phosphoserine mark is found at Ser73 and Ser115. The stretch at Gln229–Ser355 forms a coiled coil.

It belongs to the BBP1 family. In terms of assembly, homodimer. Interacts with KAR1, MPS2 and SPC29.

It localises to the cytoplasm. Its subcellular location is the cytoskeleton. The protein localises to the microtubule organizing center. It is found in the spindle pole body. Component of the spindle pole body (SPB) required for insertion of the nascent SPB into the nuclear envelope and for the proper execution of spindle pole body (SPB) duplication. Connects the central plaque of the SPB with the half-bridge. Required for proper localization of CDC5 at the SPB and for proper M-phase progression. This chain is Spindle pole component BBP1 (BBP1), found in Saccharomyces cerevisiae (strain ATCC 204508 / S288c) (Baker's yeast).